The primary structure comprises 217 residues: Transmembrane protein 247 (217 aa).

The segment covering 1 to 10 has biased composition (basic and acidic residues); sequence MATEDREMME. The segment at 1-87 is disordered; it reads MATEDREMME…GPATTKGQAG (87 aa). A coiled-coil region spans residues 109–154; the sequence is RERDAEMELEKVRMEFELKRLKYLHEENERQRQHEEVMEQLQQQAT. 2 helical membrane passes run 165 to 185 and 192 to 212; these read LLLP…IHII and IFFL…LCLI.

It localises to the membrane. This is Transmembrane protein 247 from Bos taurus (Bovine).